The chain runs to 161 residues: GTP-dependent dephospho-CoA kinase (161 aa).

GTP-binding residues include aspartate 37, isoleucine 38, aspartate 56, lysine 58, glutamate 112, and aspartate 135.

It belongs to the GTP-dependent DPCK family.

The enzyme catalyses 3'-dephospho-CoA + GTP = GDP + CoA + H(+). It functions in the pathway cofactor biosynthesis; coenzyme A biosynthesis. Its function is as follows. Catalyzes the GTP-dependent phosphorylation of the 3'-hydroxyl group of dephosphocoenzyme A to form coenzyme A (CoA). This chain is GTP-dependent dephospho-CoA kinase, found in Methanococcus aeolicus (strain ATCC BAA-1280 / DSM 17508 / OCM 812 / Nankai-3).